We begin with the raw amino-acid sequence, 275 residues long: tRNA pseudouridine synthase A (275 aa).

The active-site Nucleophile is Asp-56. Tyr-109 contributes to the substrate binding site.

This sequence belongs to the tRNA pseudouridine synthase TruA family.

The enzyme catalyses uridine(38/39/40) in tRNA = pseudouridine(38/39/40) in tRNA. Formation of pseudouridine at positions 38, 39 and 40 in the anticodon stem and loop of transfer RNAs. The sequence is that of tRNA pseudouridine synthase A from Methanothermobacter thermautotrophicus (strain ATCC 29096 / DSM 1053 / JCM 10044 / NBRC 100330 / Delta H) (Methanobacterium thermoautotrophicum).